The sequence spans 70 residues: DNA-directed RNA polymerase subunit omega (70 aa).

This sequence belongs to the RNA polymerase subunit omega family. The RNAP catalytic core consists of 2 alpha, 1 beta, 1 beta' and 1 omega subunit. When a sigma factor is associated with the core the holoenzyme is formed, which can initiate transcription.

It catalyses the reaction RNA(n) + a ribonucleoside 5'-triphosphate = RNA(n+1) + diphosphate. Promotes RNA polymerase assembly. Latches the N- and C-terminal regions of the beta' subunit thereby facilitating its interaction with the beta and alpha subunits. The chain is DNA-directed RNA polymerase subunit omega from Marinobacter nauticus (strain ATCC 700491 / DSM 11845 / VT8) (Marinobacter aquaeolei).